Consider the following 230-residue polypeptide: 3-beta-hydroxysteroid-Delta(8),Delta(7)-isomerase (230 aa).

An N-acetylthreonine modification is found at Thr-2. Transmembrane regions (helical) follow at residues 29 to 49 (SHILVGLFSISGGLIVITWLL), 66 to 86 (LCWFAVCTFIHLVIEGWFSLY), 121 to 141 (METVTACLWGPLSLWVVIAFL), and 185 to 205 (FWFYFVFLNAVWLVIPSILVL). An EXPERA domain is found at 61-204 (GRRLALCWFA…VWLVIPSILV (144 aa)).

It belongs to the EBP family.

The protein resides in the endoplasmic reticulum membrane. The protein localises to the nucleus envelope. It is found in the cytoplasmic vesicle. The catalysed reaction is lathosterol = 5alpha-cholest-8-en-3beta-ol. It catalyses the reaction zymosterol = 5alpha-cholesta-7,24-dien-3beta-ol. The enzyme catalyses 5,6alpha-epoxy-5alpha-cholestan-3beta-ol + H2O = 5alpha-cholestane-3beta,5,6beta-triol. It carries out the reaction 5,6beta-epoxy-5beta-cholestan-3beta-ol + H2O = 5alpha-cholestane-3beta,5,6beta-triol. It participates in steroid biosynthesis; cholesterol biosynthesis. Its function is as follows. Isomerase that catalyzes the conversion of Delta(8)-sterols to their corresponding Delta(7)-isomers. Component of the microsomal antiestrogen binding site (AEBS), a multiproteic complex at the ER membrane that consists of an association between EBP and 7-dehydrocholesterol reductase/DHCR7. This complex is responsible for cholesterol-5,6-epoxide hydrolase (ChEH) activity, which consists in the hydration of cholesterol-5,6-epoxides (5,6-EC) into cholestane-3beta,5alpha,6beta-triol (CT). The precise role of each component of this complex has not been described yet. The sequence is that of 3-beta-hydroxysteroid-Delta(8),Delta(7)-isomerase from Mus musculus (Mouse).